A 41-amino-acid polypeptide reads, in one-letter code: Large ribosomal subunit protein bL36 (41 aa).

The protein belongs to the bacterial ribosomal protein bL36 family.

This Xanthomonas axonopodis pv. citri (strain 306) protein is Large ribosomal subunit protein bL36.